The sequence spans 449 residues: tRNA-2-methylthio-N(6)-dimethylallyladenosine synthase (449 aa).

Positions 3–124 (KMLYIKTYGC…LPTMLEKLDS (122 aa)) constitute an MTTase N-terminal domain. Residues Cys-12, Cys-48, Cys-87, Cys-163, Cys-167, and Cys-170 each coordinate [4Fe-4S] cluster. One can recognise a Radical SAM core domain in the interval 149-380 (KSPTVSGLVS…QAQLMLQQLE (232 aa)). The TRAM domain maps to 383–447 (QKLIGKVVPV…ASSLFGEVCP (65 aa)).

Belongs to the methylthiotransferase family. MiaB subfamily. Monomer. It depends on [4Fe-4S] cluster as a cofactor.

The protein localises to the cytoplasm. The enzyme catalyses N(6)-dimethylallyladenosine(37) in tRNA + (sulfur carrier)-SH + AH2 + 2 S-adenosyl-L-methionine = 2-methylsulfanyl-N(6)-dimethylallyladenosine(37) in tRNA + (sulfur carrier)-H + 5'-deoxyadenosine + L-methionine + A + S-adenosyl-L-homocysteine + 2 H(+). Functionally, catalyzes the methylthiolation of N6-(dimethylallyl)adenosine (i(6)A), leading to the formation of 2-methylthio-N6-(dimethylallyl)adenosine (ms(2)i(6)A) at position 37 in tRNAs that read codons beginning with uridine. The protein is tRNA-2-methylthio-N(6)-dimethylallyladenosine synthase of Orientia tsutsugamushi (strain Boryong) (Rickettsia tsutsugamushi).